The following is a 299-amino-acid chain: 4-hydroxy-tetrahydrodipicolinate synthase (299 aa).

Pyruvate is bound at residue T45. The Proton donor/acceptor role is filled by Y133. Catalysis depends on K161, which acts as the Schiff-base intermediate with substrate. I203 is a pyruvate binding site.

It belongs to the DapA family. In terms of assembly, homotetramer; dimer of dimers.

Its subcellular location is the cytoplasm. The enzyme catalyses L-aspartate 4-semialdehyde + pyruvate = (2S,4S)-4-hydroxy-2,3,4,5-tetrahydrodipicolinate + H2O + H(+). Its pathway is amino-acid biosynthesis; L-lysine biosynthesis via DAP pathway; (S)-tetrahydrodipicolinate from L-aspartate: step 3/4. In terms of biological role, catalyzes the condensation of (S)-aspartate-beta-semialdehyde [(S)-ASA] and pyruvate to 4-hydroxy-tetrahydrodipicolinate (HTPA). The protein is 4-hydroxy-tetrahydrodipicolinate synthase of Blochmanniella pennsylvanica (strain BPEN).